We begin with the raw amino-acid sequence, 101 residues long: NADH-quinone oxidoreductase subunit K (101 aa).

Transmembrane regions (helical) follow at residues 4–24 (LAHFLVLGAILFAISIVGIFL), 30–50 (IVLLMAIELMLLAVNINFVAF), and 61–81 (VFVFFILTVAAAESAIGLAIL).

It belongs to the complex I subunit 4L family. NDH-1 is composed of 14 different subunits. Subunits NuoA, H, J, K, L, M, N constitute the membrane sector of the complex.

It localises to the cell inner membrane. The enzyme catalyses a quinone + NADH + 5 H(+)(in) = a quinol + NAD(+) + 4 H(+)(out). NDH-1 shuttles electrons from NADH, via FMN and iron-sulfur (Fe-S) centers, to quinones in the respiratory chain. The immediate electron acceptor for the enzyme in this species is believed to be ubiquinone. Couples the redox reaction to proton translocation (for every two electrons transferred, four hydrogen ions are translocated across the cytoplasmic membrane), and thus conserves the redox energy in a proton gradient. This chain is NADH-quinone oxidoreductase subunit K, found in Cupriavidus necator (strain ATCC 17699 / DSM 428 / KCTC 22496 / NCIMB 10442 / H16 / Stanier 337) (Ralstonia eutropha).